The primary structure comprises 165 residues: DELTA-actitoxin-Oor1a (165 aa).

An N-terminal region region spans residues 1–17 (ATFRVLAKVLAELGKVS). 5 residues coordinate phosphocholine: S41, V74, S92, P94, and Y125. Positions 92-107 (SVPYDYNLYSNWWNVK) are trp-rich region, which is important for the binding to lipid membrane.

This sequence belongs to the actinoporin family. Sea anemone subfamily. In terms of assembly, octamer or nonamer in membranes. Monomer in the soluble state.

It is found in the secreted. The protein localises to the nematocyst. It localises to the target cell membrane. Its function is as follows. Pore-forming protein that forms cations-selective hydrophilic pores of around 1 nm and causes cardiac stimulation and cytolysis. Pore formation is a multi-step process that involves specific recognition of membrane sphingomyelin (but neither cholesterol nor phosphatidylcholine) using aromatic rich region and adjacent phosphocholine (POC) binding site, firm binding to the membrane (mainly driven by hydrophobic interactions) accompanied by the transfer of the N-terminal region to the lipid-water interface and finally pore formation after oligomerization of monomers. Cytolytic effects include red blood cells hemolysis, platelet aggregation and lysis, cytotoxic and cytostatic effects on fibroblasts. Lethality in mammals has been ascribed to severe vasospasm of coronary vessels, cardiac arrhythmia, and inotropic effects. This Oulactis orientalis (Japan anemone) protein is DELTA-actitoxin-Oor1a.